A 265-amino-acid polypeptide reads, in one-letter code: Sarcotoxin II-1 (265 aa).

An N-terminal signal peptide occupies residues Met-1–Ala-22. A propeptide spans Tyr-23–Pro-24 (removed by a dipeptidylpeptidase). The residue at position 25 (Gln-25) is a Pyrrolidone carboxylic acid. Gly-264 is subject to Glycine amide.

It belongs to the attacin/sarcotoxin-2 family. In terms of tissue distribution, synthesized by the fat body and is eventually secreted into the hemolymph.

It localises to the secreted. Its function is as follows. Sarcotoxin II is an antibacterial protein which plays a role in the inflammatory response of this insect. The main effect of sarcotoxin II on E.coli may be the inhibition of cell wall synthesis, including septum formation. The chain is Sarcotoxin II-1 from Sarcophaga peregrina (Flesh fly).